The primary structure comprises 47 residues: uncharacterized protein (47 aa).

The disordered stretch occupies residues phenylalanine 24–isoleucine 47.

This is an uncharacterized protein from Mycobacterium tuberculosis (strain ATCC 25618 / H37Rv).